The following is a 45-amino-acid chain: Toxin Bcs III 15.09 (45 aa).

Positions 2–44 (QGTACTGEHAHNFCLNGGTCRHIQSLGEYYCICPEGYTGHRCE) constitute an EGF-like domain. Intrachain disulfides connect C6–C21, C15–C32, and C34–C43.

It is found in the secreted. It localises to the nematocyst. Its function is as follows. Has both toxic and EGF activity. This chain is Toxin Bcs III 15.09, found in Bunodosoma caissarum (Sea anemone).